The chain runs to 270 residues: Phospholysine phosphohistidine inorganic pyrophosphate phosphatase (270 aa).

Mg(2+) is bound by residues D19 and C21. Substrate is bound by residues 19-21 (DMC), 56-57 (TN), and K191. D216 serves as a coordination point for Mg(2+).

It belongs to the HAD-like hydrolase superfamily. Requires Mg(2+) as cofactor.

The protein localises to the cytoplasm. The protein resides in the nucleus. It catalyses the reaction diphosphate + H2O = 2 phosphate + H(+). Phosphatase that hydrolyzes imidodiphosphate, 3-phosphohistidine and 6-phospholysine. Has broad substrate specificity and can also hydrolyze inorganic diphosphate, but with lower efficiency. This Danio rerio (Zebrafish) protein is Phospholysine phosphohistidine inorganic pyrophosphate phosphatase (lhpp).